Consider the following 221-residue polypeptide: Keratin-associated protein 10-3 (221 aa).

A run of 18 repeats spans residues 26 to 30, 31 to 35, 36 to 40, 57 to 61, 79 to 83, 89 to 93, 99 to 103, 104 to 108, 109 to 113, 114 to 118, 119 to 123, 124 to 128, 136 to 140, 146 to 150, 151 to 155, 177 to 181, 188 to 192, and 210 to 214. Residues 26–214 are 18 X 5 AA repeats of C-C-X(3); sequence CCEPPCCATS…RLSSACCGLS (189 aa).

This sequence belongs to the KRTAP type 10 family. Interacts with hair keratins. Restricted to a narrow region of the hair fiber cuticle, lying approximately 20 cell layers above the apex of the dermal papilla of the hair root; not detected in any other tissues.

Functionally, in the hair cortex, hair keratin intermediate filaments are embedded in an interfilamentous matrix, consisting of hair keratin-associated proteins (KRTAP), which are essential for the formation of a rigid and resistant hair shaft through their extensive disulfide bond cross-linking with abundant cysteine residues of hair keratins. The matrix proteins include the high-sulfur and high-glycine-tyrosine keratins. The protein is Keratin-associated protein 10-3 (KRTAP10-3) of Homo sapiens (Human).